Reading from the N-terminus, the 152-residue chain is ALK and LTK ligand 2 (152 aa).

Residues 1 to 24 (MRGPGHPLLLGLLLVLGAAGRGRG) form the signal peptide. Intrachain disulfides connect Cys111/Cys147 and Cys125/Cys134.

The protein belongs to the ALKAL family. In terms of assembly, homodimer; interchain disulfide bond is not required for homodimerization. In terms of tissue distribution, widely expressed with highest levels in adrenal gland and modest levels in pancreas, testis and uterus.

Its subcellular location is the secreted. It is found in the cell membrane. In terms of biological role, cytokine that acts as a physiological ligand for receptor tyrosine kinases LTK and ALK, leading to their activation. Cytokine-binding is sufficient to activate LTK. In contrast, ALKAL2-driven activation of ALK is coupled with heparin-binding to ALK. Stimulation of ALK signaling is involved in neural development and regulation of energy expenditure. The chain is ALK and LTK ligand 2 from Homo sapiens (Human).